A 120-amino-acid polypeptide reads, in one-letter code: GATA transcription factor 23 (120 aa).

Residues 22–76 (KGTIRCCSECKTTKTPMWRGGPTGPKSLCNACGIRHRKQRRSELLGIHIIRSHKS) form a GATA-type zinc finger.

This sequence belongs to the type IV zinc-finger family. Class B subfamily.

Its subcellular location is the nucleus. Transcriptional regulator that specifically binds 5'-GATA-3' or 5'-GAT-3' motifs within gene promoters. The sequence is that of GATA transcription factor 23 (GATA23) from Arabidopsis thaliana (Mouse-ear cress).